Reading from the N-terminus, the 165-residue chain is Phosphopantetheine adenylyltransferase (165 aa).

T9 lines the substrate pocket. Residues 9-10 (TF) and H17 contribute to the ATP site. 3 residues coordinate substrate: K41, L73, and R87. Residues 88–90 (GLR), E98, and 123–129 (YQFISGT) each bind ATP.

The protein belongs to the bacterial CoaD family. As to quaternary structure, homohexamer. Mg(2+) serves as cofactor.

Its subcellular location is the cytoplasm. It catalyses the reaction (R)-4'-phosphopantetheine + ATP + H(+) = 3'-dephospho-CoA + diphosphate. Its pathway is cofactor biosynthesis; coenzyme A biosynthesis; CoA from (R)-pantothenate: step 4/5. Functionally, reversibly transfers an adenylyl group from ATP to 4'-phosphopantetheine, yielding dephospho-CoA (dPCoA) and pyrophosphate. The protein is Phosphopantetheine adenylyltransferase of Polynucleobacter necessarius subsp. necessarius (strain STIR1).